We begin with the raw amino-acid sequence, 319 residues long: NADH-quinone oxidoreductase subunit H 1 (319 aa).

The next 9 membrane-spanning stretches (helical) occupy residues 5–25, 78–98, 109–129, 147–167, 179–199, 214–234, 238–258, 262–282, and 294–314; these read ILTA…AGVF, LAPA…AFGE, VMFL…GALA, LAYE…AGSL, VWFI…GIAA, LVGG…FLGE, ILLV…GPWL, IWFG…RAAL, and AWKV…FIVV.

It belongs to the complex I subunit 1 family. As to quaternary structure, NDH-1 is composed of 14 different subunits. Subunits NuoA, H, J, K, L, M, N constitute the membrane sector of the complex.

Its subcellular location is the cell inner membrane. It catalyses the reaction a quinone + NADH + 5 H(+)(in) = a quinol + NAD(+) + 4 H(+)(out). NDH-1 shuttles electrons from NADH, via FMN and iron-sulfur (Fe-S) centers, to quinones in the respiratory chain. The immediate electron acceptor for the enzyme in this species is believed to be ubiquinone. Couples the redox reaction to proton translocation (for every two electrons transferred, four hydrogen ions are translocated across the cytoplasmic membrane), and thus conserves the redox energy in a proton gradient. This subunit may bind ubiquinone. The protein is NADH-quinone oxidoreductase subunit H 1 of Rhodopseudomonas palustris (strain BisA53).